We begin with the raw amino-acid sequence, 412 residues long: Divalent metal cation transporter MntH (412 aa).

The Cytoplasmic segment spans residues 1–19; it reads MTNYRVESSSGRAARKMRL. Residues 20-39 traverse the membrane as a helical segment; the sequence is ALMGPAFIAAIGYIDPGNFA. Topologically, residues 40-51 are periplasmic; it reads TNIQAGASFGYQ. The helical transmembrane segment at 52–71 threads the bilayer; sequence LLWVVVWANLMAMLIQILSA. Residues 72–95 are Cytoplasmic-facing; it reads KLGIATGKNLAEQIRDHYPRPFVW. The helical transmembrane segment at 96 to 118 threads the bilayer; the sequence is FYWVQAEIIAMATDLAEFIGAAI. Topologically, residues 119–125 are periplasmic; it reads GFKLILG. The chain crosses the membrane as a helical span at residues 126 to 145; that stretch reads VSLLQGAVLTGIATFLILML. The Cytoplasmic portion of the chain corresponds to 146–155; sequence QRRGQKPLEK. Residues 156–175 form a helical membrane-spanning segment; sequence VIGGLLLFVAAAYIVELIFS. At 176-196 the chain is on the periplasmic side; that stretch reads QPNLAQLGKGMVIPSLPTSEA. A helical transmembrane segment spans residues 197–220; that stretch reads VFLAAGVLGATIMPHVIYLHSSLT. Over 221-238 the chain is Cytoplasmic; the sequence is QHLHGGSRQQRYSATKWD. A helical transmembrane segment spans residues 239-258; that stretch reads VAIAMTIAGFVNLAMMATAA. The Periplasmic portion of the chain corresponds to 259–276; it reads AAFHFSGHTGVADLDEAY. Residues 277-297 traverse the membrane as a helical segment; it reads LTLQPLLSHAAATVFGLSLVA. The Cytoplasmic portion of the chain corresponds to 298 to 327; sequence AGLSSTVVGTLAGQVVMQGFIRFHIPLWVR. Residues 328 to 344 form a helical membrane-spanning segment; the sequence is RTVTMLPSFIVILMGLD. Residues 345–350 lie on the Periplasmic side of the membrane; that stretch reads PTRILV. A helical transmembrane segment spans residues 351–370; sequence MSQVLLSFGIALALVPLLIF. Topologically, residues 371–387 are cytoplasmic; sequence TSDSKLMGDLVNSKRVK. Residues 388–406 traverse the membrane as a helical segment; it reads QTGWVIVVLVVALNIWLLV. The Periplasmic segment spans residues 407-412; sequence GTALGL.

The protein belongs to the NRAMP family.

It localises to the cell inner membrane. In terms of biological role, h(+)-stimulated, divalent metal cation uptake system. This is Divalent metal cation transporter MntH from Escherichia coli O127:H6 (strain E2348/69 / EPEC).